A 249-amino-acid chain; its full sequence is DNA repair protein RecO (249 aa).

It belongs to the RecO family.

In terms of biological role, involved in DNA repair and RecF pathway recombination. The chain is DNA repair protein RecO from Exiguobacterium sp. (strain ATCC BAA-1283 / AT1b).